Here is a 112-residue protein sequence, read N- to C-terminus: Cytochrome c-551 (112 aa).

An N-terminal signal peptide occupies residues 1 to 20 (MKSKLSILMIGFALSVLLAA). C21 carries N-palmitoyl cysteine lipidation. C21 carries S-diacylglycerol cysteine lipidation. A compositionally biased stretch (basic and acidic residues) spans 25–35 (DAKEEKTDTGS). The tract at residues 25–44 (DAKEEKTDTGSKTEATASEG) is disordered. The Cytochrome c domain occupies 39 to 112 (ATASEGEELY…VIAKWLSEKK (74 aa)). 4 residues coordinate heme c: C52, C55, H56, and M91.

Binds 1 heme c group covalently per subunit.

The protein resides in the cell membrane. Functionally, electron carrier protein. The chain is Cytochrome c-551 (cccB) from Bacillus subtilis (strain 168).